A 248-amino-acid chain; its full sequence is Granzyme F (248 aa).

Positions 1-18 (MPPILILLTLLLPLRAGA) are cleaved as a signal peptide. A propeptide spanning residues 19 to 20 (EE) is cleaved from the precursor. The 226-residue stretch at 21 to 246 (IIGGHEVKPH…YLPWISRNMK (226 aa)) folds into the Peptidase S1 domain. A disulfide bond links Cys-50 and Cys-66. His-65 acts as the Charge relay system in catalysis. A glycan (N-linked (GlcNAc...) asparagine) is linked at Asn-106. Residue Asp-109 is the Charge relay system of the active site. Intrachain disulfides connect Cys-143–Cys-210 and Cys-175–Cys-189. Asn-154 is a glycosylation site (N-linked (GlcNAc...) asparagine). The Charge relay system role is filled by Ser-204. N-linked (GlcNAc...) asparagine glycosylation occurs at Asn-223.

It belongs to the peptidase S1 family. Granzyme subfamily.

It localises to the cytolytic granule. Functionally, this enzyme is probably necessary for target cell lysis in cell-mediated immune responses. This is Granzyme F (Gzmf) from Mus musculus (Mouse).